A 588-amino-acid chain; its full sequence is Probable G-protein coupled receptor 162 (588 aa).

The Extracellular portion of the chain corresponds to 1–17; the sequence is MARGGLGAEEASLRSNA. The helical transmembrane segment at 18-38 threads the bilayer; sequence LSWLACGLLALLANAWIILSI. Over 39–49 the chain is Cytoplasmic; the sequence is SAKQQKHKPLE. The chain crosses the membrane as a helical span at residues 50–70; the sequence is LLLCFLAGTHILMAAVPLTTF. Topologically, residues 71 to 91 are extracellular; sequence AVVQLRRQASSDYDWNESICK. N-linked (GlcNAc...) asparagine glycosylation occurs at asparagine 86. Residues 92 to 112 traverse the membrane as a helical segment; the sequence is VFVSTYYTLALATCFTVASLS. Residues 113–133 lie on the Cytoplasmic side of the membrane; that stretch reads YHRMWMVRWPVNYRLSNAKKQ. A helical membrane pass occupies residues 134 to 154; sequence ALHAVMGIWMVSFILSTLPSI. The Extracellular segment spans residues 155 to 174; the sequence is GWHNNGERYYARGCQFIVSK. The chain crosses the membrane as a helical span at residues 175-195; the sequence is IGLGFGVCFSLLLLGGIVMGL. The Cytoplasmic segment spans residues 196 to 275; it reads VCVAITFYQT…SLQVTNLVSA (80 aa). A helical membrane pass occupies residues 276–296; the sequence is IVFLYDSLTGVPILVVSFFSL. Topologically, residues 297–303 are extracellular; sequence KSDSAPP. A helical transmembrane segment spans residues 304 to 324; it reads WMVLAVLWCSMAQTLLLPSFI. Residues 325-588 are Cytoplasmic-facing; sequence WSCERYRADV…GNPIFPQLTL (264 aa). Serine 413 and serine 435 each carry phosphoserine. Disordered regions lie at residues 511 to 545 and 561 to 588; these read ETPL…SPDS and SLTG…QLTL. Pro residues predominate over residues 514 to 525; sequence LPSPTASPGPSP. The segment covering 530–540 has biased composition (low complexity); sequence PLGFSPRRLSL.

It belongs to the G-protein coupled receptor 1 family.

It localises to the cell membrane. Its function is as follows. Orphan receptor. This Mus musculus (Mouse) protein is Probable G-protein coupled receptor 162 (Gpr162).